Reading from the N-terminus, the 197-residue chain is Lactoylglutathione lyase-like protein terB (197 aa).

Positions 1–19 are cleaved as a signal peptide; the sequence is MARFAVLQLLLPLAAGLTG. Asparagine 82, asparagine 99, and asparagine 140 each carry an N-linked (GlcNAc...) asparagine glycan.

The protein belongs to the glyoxalase I family.

Functionally, lactoylglutathione lyase-like protein; part of the gene cluster that mediates the biosynthesis of terrein, a fungal metabolite with ecological, antimicrobial, antiproliferative, and antioxidative activities. The first step in the pathway is performed by the polyketide synthase terA that produces 4-hydroxy-6-methylpyranon (4-HMP), orsellinic acid (OA), and 2,3-dehydro-6-hydroxymellein (2,3-dehydro-6-HM) by condensing acetyl-CoA with two, three, or four malonyl-CoA units, respectively. 4-HMP and OA are not pathway intermediates, but are rather shunt or side products. 2,3-dehydro-6-HM is further converted to 6-hydroxymellein (6-HM) by the 6-hydroxymellein synthase terB. The monooxygenases terC and terD, the multicopper oxidase terE and the Kelch-like protein terF are then involved in the transformation of 6-HM to terrein. Even if they are co-regulated with the other terrein cluster genes, terH and terI seem to be dispensable for terrein production; whereas one or both of the 2 transporters terG and terJ are probably required for efficient secretion of metabolites. The polypeptide is Lactoylglutathione lyase-like protein terB (Aspergillus terreus (strain NIH 2624 / FGSC A1156)).